A 339-amino-acid chain; its full sequence is Putative zinc metalloprotease FN1322 (339 aa).

Zn(2+) is bound at residue His17. Residue Glu18 is part of the active site. His21 lines the Zn(2+) pocket. Helical transmembrane passes span 88 to 110 (FIVL…FVTA), 262 to 284 (FGWI…LNLL), and 318 to 335 (GMIL…NDVW). Residues 96-179 (FMNFLMAFIL…ITALVERNGK (84 aa)) enclose the PDZ domain.

It belongs to the peptidase M50B family. It depends on Zn(2+) as a cofactor.

It localises to the cell membrane. The polypeptide is Putative zinc metalloprotease FN1322 (Fusobacterium nucleatum subsp. nucleatum (strain ATCC 25586 / DSM 15643 / BCRC 10681 / CIP 101130 / JCM 8532 / KCTC 2640 / LMG 13131 / VPI 4355)).